The primary structure comprises 159 residues: RNA pyrophosphohydrolase (159 aa).

Residues 6 to 149 enclose the Nudix hydrolase domain; sequence GFRPNVGIIL…KREVYRRALK (144 aa). The Nudix box motif lies at 38 to 59; the sequence is GGINPDETPEDALYRELNEEVG.

It belongs to the Nudix hydrolase family. RppH subfamily. A divalent metal cation serves as cofactor.

Functionally, accelerates the degradation of transcripts by removing pyrophosphate from the 5'-end of triphosphorylated RNA, leading to a more labile monophosphorylated state that can stimulate subsequent ribonuclease cleavage. The protein is RNA pyrophosphohydrolase of Pseudomonas fluorescens (strain SBW25).